Reading from the N-terminus, the 296-residue chain is HTH-type transcriptional activator AmpR (296 aa).

The HTH lysR-type domain maps to 6–63 (LPLNALRAFEASARHLSFTRAAIELCVTQAAVSHQVKSLEERLGVALFKRLPRGLMLT). The segment at residues 23 to 42 (FTRAAIELCVTQAAVSHQVK) is a DNA-binding region (H-T-H motif). The interval 83-296 (LLERFEGGHY…EMAAVEARGR (214 aa)) is includes the LysR substrate-binding / effector-binding domain, involved in binding to specific cell-wall-derived muropeptide products, some of which have signaling functions, leading to disparate responses such as antibiotic resistance, virulence, and host cell inflammation. Residues 91–289 (HYRDVLTVGA…AFRGWLLEMA (199 aa)) enclose the LysR substrate-binding domain.

The protein belongs to the LysR transcriptional regulatory family. As to quaternary structure, homodimer.

The protein localises to the cytoplasm. It is found in the membrane. Its function is as follows. Transcription regulator that plays a critical role in the expression of beta-lactamase AmpC, acting by positive regulation of the ampC gene. Has a wider role in the regulation of expression of genes involved in proteolysis, quorum sensing, and virulence. Acts by binding directly to the promoter region of the ampC gene. Probably does not regulate transcription of its own gene. This is HTH-type transcriptional activator AmpR (ampR) from Pseudomonas aeruginosa (strain ATCC 15692 / DSM 22644 / CIP 104116 / JCM 14847 / LMG 12228 / 1C / PRS 101 / PAO1).